A 413-amino-acid polypeptide reads, in one-letter code: Paxillin homolog 1 (413 aa).

Residues 33-45 show a composition bias toward basic and acidic residues; it reads HISDRRSQSRDDF. The disordered stretch occupies residues 33–157; it reads HISDRRSQSR…PLHSDSMIGT (125 aa). Residues 49-69 are compositionally biased toward polar residues; sequence YDLQGNLNTQSVSNGNITTSP. Over residues 73 to 92 the composition is skewed to basic and acidic residues; the sequence is RSSEGKDYSKSQERIYENES. Polar residues predominate over residues 118–143; the sequence is ASSSRKSLGPPSQAQSYSDVRSNGRS. LIM zinc-binding domains follow at residues 174–232, 233–292, 293–350, and 351–410; these read GDCA…NQFS, PKCQ…LFAP, KCNG…ESRG, and SICS…TYAL.

This sequence belongs to the paxillin family. In terms of tissue distribution, isoform a: Expressed in all 95 body wall muscle cells as well as in the pharyngeal muscle cells (at protein level). Isoform c: Expressed in the body wall muscle cells and in the pharyngeal muscle cells.

The protein resides in the cell junction. It localises to the adherens junction. It is found in the cell membrane. Its subcellular location is the cytoplasm. The protein localises to the myofibril. The protein resides in the sarcomere. It localises to the m line. It is found in the cell projection. Its subcellular location is the podosome. Required for myofilament organization of the pharyngeal sarcomeres and for pharyngeal muscle contractions and hence for pharyngeal pumping. Together with lin-8, might be required for myofilament organization in the body wall muscles. The polypeptide is Paxillin homolog 1 (pxl-1) (Caenorhabditis elegans).